The primary structure comprises 483 residues: Probable cytochrome P450 517A1 (483 aa).

The helical transmembrane segment at 1 to 21 (MEIINVFLFLIILFLVKDFVK) threads the bilayer. Cys429 provides a ligand contact to heme.

The protein belongs to the cytochrome P450 family. Requires heme as cofactor.

The protein localises to the membrane. The polypeptide is Probable cytochrome P450 517A1 (cyp517A1) (Dictyostelium discoideum (Social amoeba)).